The sequence spans 365 residues: Protein Tob1 (365 aa).

The short motif at 22 to 39 is the Bipartite nuclear localization signal element; sequence RRRVNIFGEELERLLKQK. An important for nuclear localization region spans residues 82–92; sequence VRGNLPQDLSV. Low complexity predominate over residues 144-160; that stretch reads DPASSVSSSPSPPFGHS. The tract at residues 144–171 is disordered; that stretch reads DPASSVSSSPSPPFGHSAAVSPTFMPRS. The interval 161–220 is required for interaction with CPEB3; the sequence is AAVSPTFMPRSTQPLTFTTATFAATKFGSTKMKNSGRSSKVARTSPISLGLNVNVNDLLK. Threonine 204 carries the phosphothreonine modification. Positions 228-236 match the Nuclear export signal motif; that stretch reads MHSLYGLGL. Residues 233–287 are disordered; that stretch reads GLGLGSQQQPQPQPQQPPSQPPPPPPPPQQQQQHQQQQQQQQQQQQQPQQQTSAL. Residues 243-261 are compositionally biased toward pro residues; it reads QPQPQQPPSQPPPPPPPPQ. Residues 262–283 show a composition bias toward low complexity; the sequence is QQQQHQQQQQQQQQQQQQPQQQ.

Belongs to the BTG family. As to quaternary structure, interacts with ERBB2. Interacts with CNOT7. Interacts with CPEB3 (via C-terminal RNA-binding region); recruits CNOT7 to CPEB3 to form a ternary complex required for mRNA deadenylation and decay. Interacts with CNOT8. Interacts with CPEB4. Post-translationally, phosphorylated on Ser and Thr residues.

It localises to the cytoplasm. It is found in the nucleus. Anti-proliferative protein; the function is mediated by association with deadenylase subunits of the CCR4-NOT complex. Mediates CPEB3-accelerated mRNA deadenylation by binding to CPEB3 and recruiting CNOT7 which leads to target mRNA deadenylation and decay. The sequence is that of Protein Tob1 (Tob1) from Rattus norvegicus (Rat).